The sequence spans 347 residues: Holliday junction branch migration complex subunit RuvB (347 aa).

The interval 1–183 is large ATPase domain (RuvB-L); it reads MSEERFVSGH…FGVVLQLQFY (183 aa). ATP-binding positions include L22, R23, G64, K67, T68, T69, 130–132, R173, Y183, and R220; that span reads EDF. Residue T68 coordinates Mg(2+). The small ATPAse domain (RuvB-S) stretch occupies residues 184–254; that stretch reads SEEELTRILM…VADAGLRMMG (71 aa). A head domain (RuvB-H) region spans residues 257 to 347; the sequence is AMGLDTVDHK…PEGPVQPRLF (91 aa). DNA contacts are provided by R312 and R317.

The protein belongs to the RuvB family. As to quaternary structure, homohexamer. Forms an RuvA(8)-RuvB(12)-Holliday junction (HJ) complex. HJ DNA is sandwiched between 2 RuvA tetramers; dsDNA enters through RuvA and exits via RuvB. An RuvB hexamer assembles on each DNA strand where it exits the tetramer. Each RuvB hexamer is contacted by two RuvA subunits (via domain III) on 2 adjacent RuvB subunits; this complex drives branch migration. In the full resolvosome a probable DNA-RuvA(4)-RuvB(12)-RuvC(2) complex forms which resolves the HJ.

It is found in the cytoplasm. The catalysed reaction is ATP + H2O = ADP + phosphate + H(+). The RuvA-RuvB-RuvC complex processes Holliday junction (HJ) DNA during genetic recombination and DNA repair, while the RuvA-RuvB complex plays an important role in the rescue of blocked DNA replication forks via replication fork reversal (RFR). RuvA specifically binds to HJ cruciform DNA, conferring on it an open structure. The RuvB hexamer acts as an ATP-dependent pump, pulling dsDNA into and through the RuvAB complex. RuvB forms 2 homohexamers on either side of HJ DNA bound by 1 or 2 RuvA tetramers; 4 subunits per hexamer contact DNA at a time. Coordinated motions by a converter formed by DNA-disengaged RuvB subunits stimulates ATP hydrolysis and nucleotide exchange. Immobilization of the converter enables RuvB to convert the ATP-contained energy into a lever motion, pulling 2 nucleotides of DNA out of the RuvA tetramer per ATP hydrolyzed, thus driving DNA branch migration. The RuvB motors rotate together with the DNA substrate, which together with the progressing nucleotide cycle form the mechanistic basis for DNA recombination by continuous HJ branch migration. Branch migration allows RuvC to scan DNA until it finds its consensus sequence, where it cleaves and resolves cruciform DNA. The sequence is that of Holliday junction branch migration complex subunit RuvB from Symbiobacterium thermophilum (strain DSM 24528 / JCM 14929 / IAM 14863 / T).